Reading from the N-terminus, the 93-residue chain is Putative pterin-4-alpha-carbinolamine dehydratase (93 aa).

This sequence belongs to the pterin-4-alpha-carbinolamine dehydratase family.

The enzyme catalyses (4aS,6R)-4a-hydroxy-L-erythro-5,6,7,8-tetrahydrobiopterin = (6R)-L-erythro-6,7-dihydrobiopterin + H2O. The sequence is that of Putative pterin-4-alpha-carbinolamine dehydratase from Nostoc sp. (strain PCC 7120 / SAG 25.82 / UTEX 2576).